Consider the following 214-residue polypeptide: Guanylate kinase (214 aa).

One can recognise a Guanylate kinase-like domain in the interval 6-192 (GTLYIISAPS…ALEDLKSIFR (187 aa)). An ATP-binding site is contributed by 13-20 (APSGAGKT).

The protein belongs to the guanylate kinase family.

It is found in the cytoplasm. It carries out the reaction GMP + ATP = GDP + ADP. Essential for recycling GMP and indirectly, cGMP. The polypeptide is Guanylate kinase (Pseudomonas syringae pv. tomato (strain ATCC BAA-871 / DC3000)).